The sequence spans 380 residues: Opsin-2 (380 aa).

The Extracellular portion of the chain corresponds to 1-51 (MVNTTDFYPVPAAMAYESSVGLPLLGWNVPTEHLDLVHPHWRSFQVPNKYW). N-linked (GlcNAc...) asparagine glycosylation occurs at Asn3. A helical transmembrane segment spans residues 52-76 (HFGLAFVYFMLMCMSSLGNGIVLWI). The Cytoplasmic segment spans residues 77–88 (YATTKSIRTPSN). Residues 89–115 (MFIVNLALFDVLMLLEMPMLVVSSLFY) traverse the membrane as a helical segment. At 116 to 128 (QRPVGWELGCDIY) the chain is on the extracellular side. Cys125 and Cys202 are disulfide-bonded. A helical membrane pass occupies residues 129–148 (AALGSVAGIGSAINNAAIAF). Over 149–166 (DRYRTISCPIDGRLTQGQ) the chain is Cytoplasmic. A helical membrane pass occupies residues 167–191 (VLALIAGTWVWTLPFTLMPLLRIWS). The Extracellular segment spans residues 192–215 (RFTAEGFLTTCSFDYLTDDEDTKV). The helical transmembrane segment at 216-243 (FVGCIFAWSYAFPLCLICCFYYRLIGAV) threads the bilayer. Topologically, residues 244–279 (REHEKMLRDQAKKMNVKSLQSNADTEAQSAEIRIAK) are cytoplasmic. A helical membrane pass occupies residues 280–303 (VALTIFFLFLCSWTPYAVVAMIGA). Residues 304 to 311 (FGNRAALT) lie on the Extracellular side of the membrane. A helical transmembrane segment spans residues 312–336 (PLSTMIPAVTAKIVSCIDPWVYAIN). Residue Lys323 is modified to N6-(retinylidene)lysine. The Cytoplasmic segment spans residues 337-380 (HPRFRAEVQKRMKWLHLGEDARSSKSDTSSTATDRTVGNVSASA). Positions 358–380 (RSSKSDTSSTATDRTVGNVSASA) are disordered. Over residues 362 to 372 (SDTSSTATDRT) the composition is skewed to low complexity.

It belongs to the G-protein coupled receptor 1 family. Opsin subfamily. In terms of processing, phosphorylated on some or all of the serine and threonine residues present in the C-terminal region.

The protein localises to the membrane. In terms of biological role, visual pigments are the light-absorbing molecules that mediate vision. They consist of an apoprotein, opsin, covalently linked to cis-retinal. This is Opsin-2 (Lo2) from Schistocerca gregaria (Desert locust).